A 527-amino-acid chain; its full sequence is Putative zinc finger CCCH domain-containing protein 64 (527 aa).

The disordered stretch occupies residues 103–127 (GQLRSTQTTSKRKAASRKGQREQRV). A C3H1-type zinc finger spans residues 213–241 (RPGEPFCRYYMKFGECKHMTFCKYNHPKD).

This Oryza sativa subsp. japonica (Rice) protein is Putative zinc finger CCCH domain-containing protein 64.